The sequence spans 66 residues: ATP synthase F(0) complex subunit 8 (66 aa).

The helical transmembrane segment at 8 to 24 (IWLLAVVIVLTTLMIFL) threads the bilayer. Lys54 is modified (N6-acetyllysine; alternate). Lys54 carries the post-translational modification N6-succinyllysine; alternate. An N6-acetyllysine modification is found at Lys57.

It belongs to the ATPase protein 8 family. In terms of assembly, component of the ATP synthase complex composed at least of ATP5F1A/subunit alpha, ATP5F1B/subunit beta, ATP5MC1/subunit c (homooctomer), MT-ATP6/subunit a, MT-ATP8/subunit 8, ATP5ME/subunit e, ATP5MF/subunit f, ATP5MG/subunit g, ATP5MK/subunit k, ATP5MJ/subunit j, ATP5F1C/subunit gamma, ATP5F1D/subunit delta, ATP5F1E/subunit epsilon, ATP5PF/subunit F6, ATP5PB/subunit b, ATP5PD/subunit d, ATP5PO/subunit OSCP. ATP synthase complex consists of a soluble F(1) head domain (subunits alpha(3) and beta(3)) - the catalytic core - and a membrane F(0) domain - the membrane proton channel (subunits c, a, 8, e, f, g, k and j). These two domains are linked by a central stalk (subunits gamma, delta, and epsilon) rotating inside the F1 region and a stationary peripheral stalk (subunits F6, b, d, and OSCP). Interacts with PRICKLE3.

The protein localises to the mitochondrion membrane. Its function is as follows. Subunit 8, of the mitochondrial membrane ATP synthase complex (F(1)F(0) ATP synthase or Complex V) that produces ATP from ADP in the presence of a proton gradient across the membrane which is generated by electron transport complexes of the respiratory chain. ATP synthase complex consist of a soluble F(1) head domain - the catalytic core - and a membrane F(1) domain - the membrane proton channel. These two domains are linked by a central stalk rotating inside the F(1) region and a stationary peripheral stalk. During catalysis, ATP synthesis in the catalytic domain of F(1) is coupled via a rotary mechanism of the central stalk subunits to proton translocation. In vivo, can only synthesize ATP although its ATP hydrolase activity can be activated artificially in vitro. Part of the complex F(0) domain. The polypeptide is ATP synthase F(0) complex subunit 8 (Mammuthus primigenius (Siberian woolly mammoth)).